The following is a 750-amino-acid chain: Neprilysin (750 aa).

Residues 1 to 14 (MGKSESQMDITDIN) show a composition bias toward polar residues. The disordered stretch occupies residues 1–20 (MGKSESQMDITDINTPKPKK). Gly2 carries the N-myristoyl glycine lipid modification. Residues 2–28 (GKSESQMDITDINTPKPKKKQRWTPLE) lie on the Cytoplasmic side of the membrane. Phosphoserine occurs at positions 4 and 6. A Stop-transfer sequence motif is present at residues 16-23 (PKPKKKQR). The chain crosses the membrane as a helical; Signal-anchor for type II membrane protein span at residues 29 to 51 (ISLSVLVLLLTIIAVTMIALYAT). The Extracellular segment spans residues 52–750 (YDDGICKSSD…MNPEKKCRVW (699 aa)). Positions 56–750 (ICKSSDCIKS…MNPEKKCRVW (695 aa)) constitute a Peptidase M13 domain. Cystine bridges form between Cys57/Cys62, Cys80/Cys735, Cys88/Cys695, Cys143/Cys411, Cys234/Cys242, and Cys621/Cys747. Residue Arg103 participates in a peptide binding. Asn145 carries N-linked (GlcNAc...) asparagine glycosylation. Residues Asn285 and Asn325 are each glycosylated (N-linked (GlcNAc...) asparagine). His584 is a Zn(2+) binding site. Glu585 is an active-site residue. His588 serves as a coordination point for Zn(2+). Asn628 is a glycosylation site (N-linked (GlcNAc...) asparagine). Zn(2+) is bound at residue Glu647. The active-site Proton donor is Asp651.

It belongs to the peptidase M13 family. The cofactor is Zn(2+). Post-translationally, myristoylation is a determinant of membrane targeting. Glycosylation at Asn-628 is necessary both for surface expression and neutral endopeptidase activity.

It localises to the cell membrane. It carries out the reaction Preferential cleavage of polypeptides between hydrophobic residues, particularly with Phe or Tyr at P1'.. The enzyme catalyses substance P + H2O = substance P(1-9) + L-Leu-L-Met-NH2. It catalyses the reaction substance P + H2O = substance P(1-7) + L-Phe-Gly-L-Leu-L-Met-NH2. The catalysed reaction is neurotensin + H2O = neurotensin(1-11) + L-isoleucyl-L-leucine. It carries out the reaction neurotensin + H2O = neurotensin(1-10) + L-tyrosyl-L-isoleucyl-L-leucine. Its activity is regulated as follows. Inhibited in a dose dependent manner by opiorphin. Activated by K49-P1-20, a twenty-residue synthetic peptide shortened from the snake B.asper myotoxin II. Functionally, thermolysin-like specificity, but is almost confined on acting on polypeptides of up to 30 amino acids. Biologically important in the destruction of opioid peptides such as Met- and Leu-enkephalins by cleavage of a Gly-Phe bond. Catalyzes cleavage of bradykinin, substance P and neurotensin peptides. Able to cleave angiotensin-1, angiotensin-2 and angiotensin 1-9. Involved in the degradation of atrial natriuretic factor (ANF) and brain natriuretic factor (BNP(1-32)). Displays UV-inducible elastase activity toward skin preelastic and elastic fibers. This chain is Neprilysin, found in Homo sapiens (Human).